The sequence spans 354 residues: Uroporphyrinogen decarboxylase (354 aa).

Substrate contacts are provided by residues 27-31 (RQAGR), D77, Y154, S209, and H327.

It belongs to the uroporphyrinogen decarboxylase family. In terms of assembly, homodimer.

Its subcellular location is the cytoplasm. It carries out the reaction uroporphyrinogen III + 4 H(+) = coproporphyrinogen III + 4 CO2. Its pathway is porphyrin-containing compound metabolism; protoporphyrin-IX biosynthesis; coproporphyrinogen-III from 5-aminolevulinate: step 4/4. In terms of biological role, catalyzes the decarboxylation of four acetate groups of uroporphyrinogen-III to yield coproporphyrinogen-III. The chain is Uroporphyrinogen decarboxylase from Shewanella frigidimarina (strain NCIMB 400).